A 441-amino-acid polypeptide reads, in one-letter code: tRNA(Ile)-lysidine synthase (441 aa).

ATP is bound at residue 28–33; that stretch reads SGGTDS.

It belongs to the tRNA(Ile)-lysidine synthase family.

It is found in the cytoplasm. The enzyme catalyses cytidine(34) in tRNA(Ile2) + L-lysine + ATP = lysidine(34) in tRNA(Ile2) + AMP + diphosphate + H(+). Its function is as follows. Ligates lysine onto the cytidine present at position 34 of the AUA codon-specific tRNA(Ile) that contains the anticodon CAU, in an ATP-dependent manner. Cytidine is converted to lysidine, thus changing the amino acid specificity of the tRNA from methionine to isoleucine. The sequence is that of tRNA(Ile)-lysidine synthase from Orientia tsutsugamushi (strain Boryong) (Rickettsia tsutsugamushi).